The sequence spans 253 residues: Testis-expressed protein 47 (253 aa).

This is Testis-expressed protein 47 (Tex47) from Mus musculus (Mouse).